The sequence spans 822 residues: MSSWIRWHGPAMARLWGFCWLVVGFWRAAFACPTSCKCSASRIWCSDPSPGIVAFPRLEPNSVDPENITEIFIANQKRLEIINEDDVEAYVGLRNLTIVDSGLKFVAHKAFLKNSNLQHINFTRNKLTSLSRKHFRHLDLSELILVGNPFTCSCDIMWIKTLQEAKSSPDTQDLYCLNESSKNIPLANLQIPNCGLPSANLAAPNLTVEEGKSITLSCSVAGDPVPNMYWDVGNLVSKHMNETSHTQGSLRITNISSDDSGKQISCVAENLVGEDQDSVNLTVHFAPTITFLESPTSDHHWCIPFTVKGNPKPALQWFYNGAILNESKYICTKIHVTNHTEYHGCLQLDNPTHMNNGDYTLIAKNEYGKDEKQISAHFMGWPGIDDGANPNYPDVIYEDYGTAANDIGDTTNRSNEIPSTDVTDKTGREHLSVYAVVVIASVVGFCLLVMLFLLKLARHSKFGMKGPASVISNDDDSASPLHHISNGSNTPSSSEGGPDAVIIGMTKIPVIENPQYFGITNSQLKPDTFVQHIKRHNIVLKRELGEGAFGKVFLAECYNLCPEQDKILVAVKTLKDASDNARKDFHREAELLTNLQHEHIVKFYGVCVEGDPLIMVFEYMKHGDLNKFLRAHGPDAVLMAEGNPPTELTQSQMLHIAQQIAAGMVYLASQHFVHRDLATRNCLVGENLLVKIGDFGMSRDVYSTDYYRVGGHTMLPIRWMPPESIMYRKFTTESDVWSLGVVLWEIFTYGKQPWYQLSNNEVIECITQGRVLQRPRTCPQEVYELMLGCWQREPHMRKNIKGIHTLLQNLAKASPVYLDILG.

The N-terminal stretch at 1–31 (MSSWIRWHGPAMARLWGFCWLVVGFWRAAFA) is a signal peptide. Intrachain disulfides connect cysteine 32–cysteine 38 and cysteine 36–cysteine 45. The LRRNT domain maps to 32–61 (CPTSCKCSASRIWCSDPSPGIVAFPRLEPN). Residues 32–430 (CPTSCKCSAS…DVTDKTGREH (399 aa)) lie on the Extracellular side of the membrane. 3 N-linked (GlcNAc...) asparagine glycosylation sites follow: asparagine 67, asparagine 95, and asparagine 121. 2 LRR repeats span residues 92-113 (GLRNLTIVDSGLKFVAHKAFLK) and 116-137 (NLQHINFTRNKLTSLSRKHFRH). The 49-residue stretch at 148–196 (NPFTCSCDIMWIKTLQEAKSSPDTQDLYCLNESSKNIPLANLQIPNCGL) folds into the LRRCT domain. 2 cysteine pairs are disulfide-bonded: cysteine 152-cysteine 176 and cysteine 154-cysteine 194. N-linked (GlcNAc...) asparagine glycosylation is found at asparagine 178, asparagine 205, asparagine 241, asparagine 254, asparagine 280, asparagine 325, asparagine 338, and asparagine 412. 2 Ig-like C2-type domains span residues 197–282 (PSAN…VNLT) and 295–365 (PTSD…IAKN). Cysteine 218 and cysteine 266 are disulfide-bonded. The cysteines at positions 302 and 345 are disulfide-linked. The chain crosses the membrane as a helical span at residues 431 to 454 (LSVYAVVVIASVVGFCLLVMLFLL). Residues 455–466 (KLARHSKFGMKG) form an interaction with MAPK8IP3/JIP3 region. The Cytoplasmic portion of the chain corresponds to 455 to 822 (KLARHSKFGM…ASPVYLDILG (368 aa)). The tract at residues 475–498 (DDSASPLHHISNGSNTPSSSEGGP) is disordered. The segment covering 485 to 495 (SNGSNTPSSSE) has biased composition (polar residues). At tyrosine 516 the chain carries Phosphotyrosine; by autocatalysis. The region spanning 538-807 (IVLKRELGEG…KNIKGIHTLL (270 aa)) is the Protein kinase domain. ATP is bound by residues 544–552 (LGEGAFGKV) and lysine 572. The active-site Proton acceptor is the aspartate 676. Phosphotyrosine; by autocatalysis occurs at positions 702, 706, 707, and 817.

Belongs to the protein kinase superfamily. Tyr protein kinase family. Insulin receptor subfamily. As to quaternary structure, exists in a dynamic equilibrium between monomeric (low affinity) and dimeric (high affinity) structures. Interacts (phosphorylated upon activation by BDNF) with SHC1; mediates SHC1 phosphorylation and activation. Interacts (phosphorylated upon activation by BDNF) with PLCG1 and/or PLCG2; mediates PLCG1 phosphorylation and activation. Interacts with SH2B1 and SH2B2. Interacts with NGFR; may regulate the ligand specificity of the receptor. Interacts with SORCS2; this interaction is important for normal targeting to post-synaptic densities in response to high-frequency stimulation. Interacts (phosphorylated upon ligand-binding) with SH2D1A; regulates NTRK2. Interacts with SQSTM1 and KIDINS220. Interacts (phosphorylated upon ligand-binding) with FRS2; activates the MAPK signaling pathway. Interacts with APPL1. Interacts with MAPK8IP3/JIP3 and KLC1; interaction with KLC1 is mediated by MAPK8IP3/JIP3. Interacts with SORL1; this interaction facilitates NTRK2 trafficking between synaptic plasma membranes, postsynaptic densities and cell soma, hence positively regulates BDNF signaling. Interacts with SLITRK2. Post-translationally, phosphorylated. Undergoes ligand-mediated autophosphorylation that is required for interaction with SHC1 and PLCG1 and other downstream effectors. Isoform TrkB-T-Shc is not phosphorylated. In terms of processing, ubiquitinated. Undergoes polyubiquitination upon activation; regulated by NGFR. Ubiquitination regulates the internalization of the receptor. Isoform TrkB is expressed in the central and peripheral nervous system. In the central nervous system (CNS), expression is observed in the cerebral cortex, hippocampus, thalamus, choroid plexus, granular layer of the cerebellum, brain stem, and spinal cord. In the peripheral nervous system, it is expressed in many cranial ganglia, the ophthalmic nerve, the vestibular system, multiple facial structures, the submaxillary glands, and dorsal root ganglia. Isoform TrkB-T1 is mainly expressed in the brain but also detected in other tissues including pancreas, kidney and heart. Isoform TrkB-T-Shc is predominantly expressed in the brain.

It is found in the cell membrane. The protein localises to the endosome membrane. Its subcellular location is the early endosome membrane. The protein resides in the cell projection. It localises to the axon. It is found in the dendrite. The protein localises to the cytoplasm. Its subcellular location is the perinuclear region. The protein resides in the postsynaptic density. It carries out the reaction L-tyrosyl-[protein] + ATP = O-phospho-L-tyrosyl-[protein] + ADP + H(+). With respect to regulation, the neuronal activity and the influx of calcium positively regulate the kinase activity and the internalization of the receptor which are both important for active signaling. Regulated by NGFR that may control the internalization of the receptor. NGFR may also stimulate the activation by BDNF compared to NTF3 and NTF4. SH2D1A inhibits the autophosphorylation of the receptor, and alters the recruitment and activation of downstream effectors and signaling cascades. The formation of active receptors dimers able to fully transduce the ligand-mediated signal, may be negatively regulated by the formation of inactive heterodimers with the non-catalytic isoforms. Receptor tyrosine kinase involved in the development and the maturation of the central and the peripheral nervous systems through regulation of neuron survival, proliferation, migration, differentiation, and synapse formation and plasticity. Receptor for BDNF/brain-derived neurotrophic factor and NTF4/neurotrophin-4. Alternatively can also bind NTF3/neurotrophin-3 which is less efficient in activating the receptor but regulates neuron survival through NTRK2. Upon ligand-binding, undergoes homodimerization, autophosphorylation and activation. Recruits, phosphorylates and/or activates several downstream effectors including SHC1, FRS2, SH2B1, SH2B2 and PLCG1 that regulate distinct overlapping signaling cascades. Through SHC1, FRS2, SH2B1, SH2B2 activates the GRB2-Ras-MAPK cascade that regulates for instance neuronal differentiation including neurite outgrowth. Through the same effectors controls the Ras-PI3 kinase-AKT1 signaling cascade that mainly regulates growth and survival. Through PLCG1 and the downstream protein kinase C-regulated pathways controls synaptic plasticity. Thereby, plays a role in learning and memory by regulating both short term synaptic function and long-term potentiation. PLCG1 also leads to NF-Kappa-B activation and the transcription of genes involved in cell survival. Hence, it is able to suppress anoikis, the apoptosis resulting from loss of cell-matrix interactions. May also play a role in neutrophin-dependent calcium signaling in glial cells and mediate communication between neurons and glia. This is BDNF/NT-3 growth factors receptor (NTRK2) from Homo sapiens (Human).